Here is a 233-residue protein sequence, read N- to C-terminus: 7-cyano-7-deazaguanine synthase (233 aa).

7 to 17 (LSGGLDSAVTS) contributes to the ATP binding site. Residues Cys195, Cys206, Cys209, and Cys212 each coordinate Zn(2+).

The protein belongs to the QueC family. The cofactor is Zn(2+).

It carries out the reaction 7-carboxy-7-deazaguanine + NH4(+) + ATP = 7-cyano-7-deazaguanine + ADP + phosphate + H2O + H(+). Its pathway is purine metabolism; 7-cyano-7-deazaguanine biosynthesis. Functionally, catalyzes the ATP-dependent conversion of 7-carboxy-7-deazaguanine (CDG) to 7-cyano-7-deazaguanine (preQ(0)). The sequence is that of 7-cyano-7-deazaguanine synthase from Methanococcus maripaludis (strain C5 / ATCC BAA-1333).